The following is a 565-amino-acid chain: Translation machinery-associated protein 64 (565 aa).

Positions 89–170 (LPIVLTHGFV…VAVKIIHHFN (82 aa)) constitute a PUA domain. Residues 362–447 (TLYKPFNLAK…GEILHPLLTN (86 aa)) form the SWIB/MDM2 domain. Positions 475 to 547 (IKIITEMKIG…SIIDHLNKLG (73 aa)) constitute an SUI1 domain.

The protein belongs to the eIF2D family. In terms of assembly, interacts with the 40S ribosomal subunit.

This Saccharomyces cerevisiae (strain ATCC 204508 / S288c) (Baker's yeast) protein is Translation machinery-associated protein 64 (TMA64).